The sequence spans 615 residues: Zinc metalloproteinase-disintegrin-like (615 aa).

The first 20 residues, 1–20 (MIQALLVTICLVGFPHQGSS), serve as a signal peptide directing secretion. Residues 21 to 195 (IILESGNVKD…KMNFQSANNP (175 aa)) constitute a propeptide that is removed on maturation. The 197-residue stretch at 204–400 (KYIKLAVVVD…DLPQCILNKP (197 aa)) folds into the Peptidase M12B domain. 3 disulfide bridges follow: Cys315/Cys395, Cys355/Cys379, and Cys357/Cys362. His340 lines the Zn(2+) pocket. Glu341 is an active-site residue. Zn(2+) contacts are provided by His344 and His350. Residues 408 to 494 (PAVCGNNFVE…DCPMDGLQRN (87 aa)) form the Disintegrin domain. 5 residues coordinate Ca(2+): Val410, Asn413, Phe415, Glu417, and Asp423. Disulfide bonds link Cys411-Cys440, Cys422-Cys435, Cys424-Cys430, Cys434-Cys457, Cys448-Cys454, Cys453-Cys479, Cys466-Cys486, Cys473-Cys505, Cys498-Cys510, Cys517-Cys567, Cys532-Cys576, Cys545-Cys555, Cys562-Cys602, and Cys596-Cys608. The short motif at 472 to 474 (DCD) is the D/ECD-tripeptide element.

Belongs to the venom metalloproteinase (M12B) family. P-III subfamily. P-IIIa sub-subfamily. As to quaternary structure, monomer. Zn(2+) is required as a cofactor. Expressed by the venom gland.

It localises to the secreted. Functionally, snake venom zinc metalloprotease that may induce platelet aggregation. The polypeptide is Zinc metalloproteinase-disintegrin-like (Cerberus rynchops (Dog-faced water snake)).